The following is a 340-amino-acid chain: Putative cystathionine beta-lyase (340 aa).

Lysine 208 carries the post-translational modification N6-(pyridoxal phosphate)lysine.

This sequence belongs to the trans-sulfuration enzymes family. Pyridoxal 5'-phosphate serves as cofactor.

It carries out the reaction L,L-cystathionine + H2O = L-homocysteine + pyruvate + NH4(+). The enzyme catalyses an S-substituted L-cysteine + H2O = a thiol + pyruvate + NH4(+). Its pathway is amino-acid biosynthesis; L-methionine biosynthesis via de novo pathway; L-homocysteine from L-cystathionine: step 1/1. The protein is Putative cystathionine beta-lyase (IRC7) of Saccharomyces cerevisiae (strain ATCC 204508 / S288c) (Baker's yeast).